Here is a 763-residue protein sequence, read N- to C-terminus: Xaa-Pro dipeptidyl-peptidase (763 aa).

Catalysis depends on charge relay system residues Ser-348, Asp-468, and His-498.

Belongs to the peptidase S15 family. Homodimer.

Its subcellular location is the cytoplasm. The catalysed reaction is Hydrolyzes Xaa-Pro-|- bonds to release unblocked, N-terminal dipeptides from substrates including Ala-Pro-|-p-nitroanilide and (sequentially) Tyr-Pro-|-Phe-Pro-|-Gly-Pro-|-Ile.. Functionally, removes N-terminal dipeptides sequentially from polypeptides having unsubstituted N-termini provided that the penultimate residue is proline. The protein is Xaa-Pro dipeptidyl-peptidase of Lactococcus lactis subsp. cremoris (strain SK11).